A 174-amino-acid chain; its full sequence is Co-chaperone protein HscB homolog (174 aa).

One can recognise a J domain in the interval 2–74 (NYFELFSLLP…IQRAEHLLAL (73 aa)).

The protein belongs to the HscB family. Interacts with HscA and stimulates its ATPase activity.

Functionally, co-chaperone involved in the maturation of iron-sulfur cluster-containing proteins. Seems to help targeting proteins to be folded toward HscA. This Shewanella pealeana (strain ATCC 700345 / ANG-SQ1) protein is Co-chaperone protein HscB homolog.